The following is a 201-amino-acid chain: Lipopolysaccharide core heptose(II)-phosphate phosphatase (201 aa).

Positions 1–35 (MLAFILRFIKNKSYFALLAGAWVIIAGLTSQHAWS) are cleaved as a signal peptide.

It belongs to the phosphoglycerate mutase family. Ais subfamily.

It is found in the periplasm. It participates in bacterial outer membrane biogenesis; lipopolysaccharide metabolism. Its function is as follows. Catalyzes the dephosphorylation of heptose(II) of the outer membrane lipopolysaccharide core. This is Lipopolysaccharide core heptose(II)-phosphate phosphatase from Salmonella arizonae (strain ATCC BAA-731 / CDC346-86 / RSK2980).